The chain runs to 299 residues: tRNA dimethylallyltransferase (299 aa).

13-20 is a binding site for ATP; it reads GPTASGKT. 15–20 is a binding site for substrate; the sequence is TASGKT. The tract at residues 38–41 is interaction with substrate tRNA; it reads DSRQ.

It belongs to the IPP transferase family. In terms of assembly, monomer. Mg(2+) is required as a cofactor.

The catalysed reaction is adenosine(37) in tRNA + dimethylallyl diphosphate = N(6)-dimethylallyladenosine(37) in tRNA + diphosphate. In terms of biological role, catalyzes the transfer of a dimethylallyl group onto the adenine at position 37 in tRNAs that read codons beginning with uridine, leading to the formation of N6-(dimethylallyl)adenosine (i(6)A). This chain is tRNA dimethylallyltransferase, found in Synechococcus sp. (strain CC9605).